Here is a 606-residue protein sequence, read N- to C-terminus: Chaperone protein DnaK (606 aa).

Thr174 carries the post-translational modification Phosphothreonine; by autocatalysis. Positions 579-593 (ASAAGNPGQGQTNEN) are enriched in polar residues. The disordered stretch occupies residues 579–606 (ASAAGNPGQGQTNENPGGKTIDGDYKVN).

Belongs to the heat shock protein 70 family.

Functionally, acts as a chaperone. The polypeptide is Chaperone protein DnaK (Dictyoglomus thermophilum (strain ATCC 35947 / DSM 3960 / H-6-12)).